A 282-amino-acid polypeptide reads, in one-letter code: Insulin-like growth factor-binding protein 7 (282 aa).

The N-terminal stretch at 1 to 26 is a signal peptide; the sequence is MERPSLRALLLGAAGLLLLLLPLSSS. The IGFBP N-terminal domain maps to 28–114; sequence SSDTCGPCEP…PGVSGVCVCK (87 aa). Disulfide bonds link Cys32-Cys57, Cys35-Cys59, Cys40-Cys60, Cys48-Cys63, Cys71-Cys87, Cys81-Cys111, and Cys120-Cys156. Positions 105 to 158 constitute a Kazal-like domain; that stretch reads PGVSGVCVCKSRYPVCGSDGTTYPSGCQLRAASQRAESRGEKAITQVSKGTCEQ. The Ig-like C2-type domain maps to 160–264; the sequence is PSIVTPPKDI…GQASASAKIT (105 aa). Asn171 is a glycosylation site (N-linked (GlcNAc...) asparagine). A disulfide bridge connects residues Cys181 and Cys248. The residue at position 239 (Ser239) is a Phosphoserine; by FAM20C.

May interact with VPS24/CHMP3; the relevance of such interaction however remains unclear. Interacts with CD93; this interaction plays a role in endothelial cells angiogenesis. In terms of processing, N-glycosylated.

Its subcellular location is the secreted. Functionally, binds IGF1 and IGF2 with a relatively low affinity. Stimulates prostacyclin (PGI2) production. Stimulates cell adhesion. Acts as a ligand for CD93 to play a role in angiogenesis. The polypeptide is Insulin-like growth factor-binding protein 7 (IGFBP7) (Homo sapiens (Human)).